The primary structure comprises 203 residues: Holliday junction branch migration complex subunit RuvA (203 aa).

Positions 1-64 are domain I; that stretch reads MIGRLRGIIL…EDAQLLYGFN (64 aa). The tract at residues 65–142 is domain II; it reads NKQERMLFRE…KGLHGDLFTP (78 aa). A flexible linker region spans residues 143–154; sequence AADLVLTSPNGP. The domain III stretch occupies residues 155-203; the sequence is TSDDAEQEAVAALVALGYKPQEASRMVSKIAKPDANSETLIREALRAAL.

The protein belongs to the RuvA family. As to quaternary structure, homotetramer. Forms an RuvA(8)-RuvB(12)-Holliday junction (HJ) complex. HJ DNA is sandwiched between 2 RuvA tetramers; dsDNA enters through RuvA and exits via RuvB. An RuvB hexamer assembles on each DNA strand where it exits the tetramer. Each RuvB hexamer is contacted by two RuvA subunits (via domain III) on 2 adjacent RuvB subunits; this complex drives branch migration. In the full resolvosome a probable DNA-RuvA(4)-RuvB(12)-RuvC(2) complex forms which resolves the HJ.

It is found in the cytoplasm. Its function is as follows. The RuvA-RuvB-RuvC complex processes Holliday junction (HJ) DNA during genetic recombination and DNA repair, while the RuvA-RuvB complex plays an important role in the rescue of blocked DNA replication forks via replication fork reversal (RFR). RuvA specifically binds to HJ cruciform DNA, conferring on it an open structure. The RuvB hexamer acts as an ATP-dependent pump, pulling dsDNA into and through the RuvAB complex. HJ branch migration allows RuvC to scan DNA until it finds its consensus sequence, where it cleaves and resolves the cruciform DNA. This chain is Holliday junction branch migration complex subunit RuvA, found in Enterobacter sp. (strain 638).